The following is a 210-amino-acid chain: Methylthioribulose-1-phosphate dehydratase (210 aa).

Histidine 94 and histidine 96 together coordinate Zn(2+).

This sequence belongs to the aldolase class II family. MtnB subfamily. Requires Zn(2+) as cofactor.

It catalyses the reaction 5-(methylsulfanyl)-D-ribulose 1-phosphate = 5-methylsulfanyl-2,3-dioxopentyl phosphate + H2O. The protein operates within amino-acid biosynthesis; L-methionine biosynthesis via salvage pathway; L-methionine from S-methyl-5-thio-alpha-D-ribose 1-phosphate: step 2/6. Its function is as follows. Catalyzes the dehydration of methylthioribulose-1-phosphate (MTRu-1-P) into 2,3-diketo-5-methylthiopentyl-1-phosphate (DK-MTP-1-P). The polypeptide is Methylthioribulose-1-phosphate dehydratase (Yersinia enterocolitica serotype O:8 / biotype 1B (strain NCTC 13174 / 8081)).